The primary structure comprises 128 residues: Small ribosomal subunit protein uS9 (128 aa).

Residues 105–128 (DPRSVERKKPGQPKARRRFQFSKR) form a disordered region. Residues 114 to 128 (PGQPKARRRFQFSKR) show a composition bias toward basic residues.

It belongs to the universal ribosomal protein uS9 family.

The chain is Small ribosomal subunit protein uS9 from Bacteroides thetaiotaomicron (strain ATCC 29148 / DSM 2079 / JCM 5827 / CCUG 10774 / NCTC 10582 / VPI-5482 / E50).